The chain runs to 203 residues: Probable GTP-binding protein EngB (203 aa).

Positions 21–196 constitute an EngB-type G domain; the sequence is GAPEIAFLGR…WKKIFEAAGT (176 aa). GTP-binding positions include 29–36, 55–59, 79–82, 146–149, and 175–177; these read GRSNVGKS, GRTQT, DLPG, TKID, and FSA. Ser36 and Thr57 together coordinate Mg(2+).

Belongs to the TRAFAC class TrmE-Era-EngA-EngB-Septin-like GTPase superfamily. EngB GTPase family. Mg(2+) is required as a cofactor.

Functionally, necessary for normal cell division and for the maintenance of normal septation. The chain is Probable GTP-binding protein EngB from Koribacter versatilis (strain Ellin345).